The primary structure comprises 156 residues: MSDPAKVRRHAERVRELVASVVRSQIKDPRLGMITITDARITADLRDATVFYTVLGDTAAQSGTAAALESAKGMLRSTVGKALGLRHSPTLTFVLDDVQDQVKHIDDLLAQARHADAEVQRLAARAEYAGEAQPYRVEEEPGDSEDETPPSSQDQR.

The interval 129–156 (AGEAQPYRVEEEPGDSEDETPPSSQDQR) is disordered.

Belongs to the RbfA family. In terms of assembly, monomer. Binds 30S ribosomal subunits, but not 50S ribosomal subunits or 70S ribosomes.

It localises to the cytoplasm. One of several proteins that assist in the late maturation steps of the functional core of the 30S ribosomal subunit. Associates with free 30S ribosomal subunits (but not with 30S subunits that are part of 70S ribosomes or polysomes). Required for efficient processing of 16S rRNA. May interact with the 5'-terminal helix region of 16S rRNA. The protein is Ribosome-binding factor A of Salinispora arenicola (strain CNS-205).